Here is a 231-residue protein sequence, read N- to C-terminus: Endonuclease NucS (231 aa).

Belongs to the NucS endonuclease family.

The protein resides in the cytoplasm. Its function is as follows. Cleaves both 3' and 5' ssDNA extremities of branched DNA structures. This Kocuria rhizophila (strain ATCC 9341 / DSM 348 / NBRC 103217 / DC2201) protein is Endonuclease NucS.